A 515-amino-acid chain; its full sequence is Galactose/methyl galactoside import ATP-binding protein MglA (515 aa).

ABC transporter domains lie at 8–243 (LEMR…VGRE) and 254–499 (IPKE…AKYL). 40–47 (GENGAGKS) provides a ligand contact to ATP.

It belongs to the ABC transporter superfamily. Galactose/methyl galactoside importer (TC 3.A.1.2.3) family. As to quaternary structure, the complex is composed of one ATP-binding protein (MglA), two transmembrane proteins (MglC) and a solute-binding protein (MglB).

Its subcellular location is the cell membrane. The enzyme catalyses D-galactose(out) + ATP + H2O = D-galactose(in) + ADP + phosphate + H(+). It carries out the reaction methyl beta-D-galactoside(out) + ATP + H2O = methyl beta-D-galactoside(in) + ADP + phosphate + H(+). Functionally, part of the ABC transporter complex MglABC involved in galactose/methyl galactoside import. Responsible for energy coupling to the transport system. This chain is Galactose/methyl galactoside import ATP-binding protein MglA, found in Clostridium perfringens (strain ATCC 13124 / DSM 756 / JCM 1290 / NCIMB 6125 / NCTC 8237 / Type A).